The following is a 384-amino-acid chain: Glucose-1-phosphate adenylyltransferase (384 aa).

Alpha-D-glucose 1-phosphate contacts are provided by residues Tyr103, Gly168, 183-184, and Ser194; that span reads EK.

This sequence belongs to the bacterial/plant glucose-1-phosphate adenylyltransferase family. Homotetramer.

It catalyses the reaction alpha-D-glucose 1-phosphate + ATP + H(+) = ADP-alpha-D-glucose + diphosphate. Its pathway is glycan biosynthesis; glycogen biosynthesis. Functionally, involved in the biosynthesis of ADP-glucose, a building block required for the elongation reactions to produce glycogen. Catalyzes the reaction between ATP and alpha-D-glucose 1-phosphate (G1P) to produce pyrophosphate and ADP-Glc. This Fusobacterium nucleatum subsp. nucleatum (strain ATCC 25586 / DSM 15643 / BCRC 10681 / CIP 101130 / JCM 8532 / KCTC 2640 / LMG 13131 / VPI 4355) protein is Glucose-1-phosphate adenylyltransferase.